Consider the following 257-residue polypeptide: RLA class II histocompatibility antigen, DP beta chain (257 aa).

The signal sequence occupies residues methionine 1–threonine 29. Residues proline 30–glutamine 120 are beta-1. At proline 30 to lysine 224 the chain is on the extracellular side. 2 cysteine pairs are disulfide-bonded: cysteine 45–cysteine 105 and cysteine 143–cysteine 199. The N-linked (GlcNAc...) asparagine glycan is linked to asparagine 49. The beta-2 stretch occupies residues threonine 121 to tryptophan 214. The Ig-like C1-type domain maps to proline 123–threonine 211. Residues lysine 215–lysine 224 are connecting peptide. A helical transmembrane segment spans residues methionine 225–methionine 245. At histidine 246–arginine 257 the chain is on the cytoplasmic side.

Belongs to the MHC class II family.

Its subcellular location is the membrane. This Oryctolagus cuniculus (Rabbit) protein is RLA class II histocompatibility antigen, DP beta chain.